The chain runs to 234 residues: MFILWYSASSTFGKDSDIVMGVRAQQKEKTRRSLVEAAFSQLSAERSFASLSLREVAREAGIAPTSFYRHFRDVDELGLTMVDESGLMLRQLMRQARQRIAKGGSVIRTSVSTFMEFIGNNPNAFRLLLRERSGTSAAFRAAVAREIQHFIAELADYLELENHMPRAFTEAQAEAMVTIVFSAGAEALDVGVEQRRQLEERLVLQLRMISKGAYYWYRREQEKTAIIPGNVKDE.

Positions 29-89 (KTRRSLVEAA…TMVDESGLML (61 aa)) constitute an HTH tetR-type domain. The H-T-H motif DNA-binding region spans 52 to 71 (SLREVAREAGIAPTSFYRHF).

Homodimer.

It localises to the cytoplasm. Its activity is regulated as follows. Has been suggested to require either an unsaturated acyl carrier protein or unsaturated acyl-CoA (but not their saturated equivalents) for DNA-binding. Another group suggests that unsaturated thioesters are not essential but act instead to enhance DNA-binding. In terms of biological role, binds the promoter region of at least fabA and fabB, but probably not yqfA. Represses the transcription of fabA and fabB, involved in unsaturated fatty acid (UFA) biosynthesis. By controlling UFA production, FabR directly influences the physical properties of the membrane bilayer. The chain is HTH-type transcriptional repressor FabR from Escherichia coli (strain K12).